The following is a 401-amino-acid chain: LysM domain-containing GPI-anchored protein LYP4 (401 aa).

Residues Met1–Ser23 form the signal peptide. 4 disulfide bridges follow: Cys30–Cys96, Cys36–Cys162, Cys94–Cys160, and Cys96–Cys162. LysM domains are found at residues Val106–Val156 and Leu175–Val218. 2 cysteine pairs are disulfide-bonded: Cys223–Cys255 and Cys250–Cys279. Residue Asn240 is glycosylated (N-linked (GlcNAc...) asparagine). 3 N-linked (GlcNAc...) asparagine glycosylation sites follow: Asn281, Asn288, and Asn310. Ser373 carries the GPI-anchor amidated serine lipid modification. Residues Ser374 to Trp401 constitute a propeptide, removed in mature form.

As to quaternary structure, interacts with LYP6. Interacts with CEBIP. Interacts with CERK1. In terms of tissue distribution, expressed in roots and leaves.

It localises to the cell membrane. Functions in innate immunity. Functions as a pattern recognition receptor (PRR), sensing bacterial peptidoglycan (PGN) and fungal chitin at the cell surface. Involved in resistance against the bacterial pathogen Xanthomonas oryzae pv. oryzae (Xoo) and the fungal pathogen Magnaporthe oryzae. Binds PGN and fungal chitin in vitro. Involved in microbe-associated molecular patterns (MAMPs) perception and participates in the activation of defense genes against the bacterial pathogen Xanthomonas oryzae pv. oryzicola (Xoc) or the fungal pathogen Magnaporthe oryzae. The sequence is that of LysM domain-containing GPI-anchored protein LYP4 from Oryza sativa subsp. japonica (Rice).